Here is a 247-residue protein sequence, read N- to C-terminus: Probable transcriptional regulatory protein BT_0627 (247 aa).

This sequence belongs to the TACO1 family.

It localises to the cytoplasm. This Bacteroides thetaiotaomicron (strain ATCC 29148 / DSM 2079 / JCM 5827 / CCUG 10774 / NCTC 10582 / VPI-5482 / E50) protein is Probable transcriptional regulatory protein BT_0627.